An 85-amino-acid chain; its full sequence is U4-theraphotoxin-Hhn1a (85 aa).

The N-terminal stretch at 1 to 22 is a signal peptide; the sequence is MKMTLIAILTCAAVLVLHTTAA. A propeptide spanning residues 23-48 is cleaved from the precursor; that stretch reads EELEAESQLMEVGMPDTELEAVDEER. 3 disulfide bridges follow: Cys-52/Cys-66, Cys-56/Cys-77, and Cys-71/Cys-82.

This sequence belongs to the neurotoxin 12 (Hwtx-2) family. 02 (Hwtx-2) subfamily. In terms of assembly, monomer. Expressed by the venom gland.

Its subcellular location is the secreted. Functionally, neurotoxin active on both insects and mammals. The polypeptide is U4-theraphotoxin-Hhn1a (Cyriopagopus hainanus (Chinese bird spider)).